The chain runs to 282 residues: Armadillo repeat-containing protein 1 (282 aa).

N-acetylmethionine is present on M1. Residues G39–G81 form an ARM repeat. At T137 the chain carries Phosphothreonine. Phosphoserine is present on residues S189, S246, S260, and S267. Residues D239–H261 are disordered. Residues S246–V255 are compositionally biased toward basic and acidic residues.

In terms of assembly, interacts with mitochondrial contact site and cristae organizing system (MICOS) complex components IMMT/MIC60 and MICOS10/MIC10. Interacts with mitochondrial outer membrane sorting assembly machinery (SAM) complex components SAMM50 and MTX1.

The protein resides in the cytoplasm. Its subcellular location is the mitochondrion. The protein localises to the mitochondrion outer membrane. Its function is as follows. In association with mitochondrial contact site and cristae organizing system (MICOS) complex components and mitochondrial outer membrane sorting assembly machinery (SAM) complex components may regulate mitochondrial dynamics playing a role in determining mitochondrial length, distribution and motility. The chain is Armadillo repeat-containing protein 1 (ARMC1) from Pongo abelii (Sumatran orangutan).